The sequence spans 246 residues: MPQFSVDLCLFDLDGTIVSTTTAAESAWKKLCRQHGVDPVELFKHSHGARSQEMMKKFFPKLDNTDNKGVLALEKDMADNYLDTVSLIPGAENLLLSLDVDTETQKKLPERKWAIVTSGSPYLAFSWFETILKNVGKPKVFITGFDVKNGKPDPEGYSRARDLLRQDLQLTGKQDLKYVVFEDAPVGIKAGKAMGAITVGITSSYDKSVLFDAGADYVVCDLTQVSVVKNNENGIVIQVNNPLTRD.

The active-site Nucleophile is Asp83. Residue Asp83 coordinates Mg(2+). Substrate is bound by residues Asp83, Glu92, and 146–149 (DVKN). Position 183 (Asp183) interacts with Mg(2+).

The protein belongs to the HAD-like hydrolase superfamily. DOG/GPP family. Mg(2+) is required as a cofactor.

The catalysed reaction is 2-deoxy-D-glucose 6-phosphate + H2O = 2-deoxy-D-glucose + phosphate. Its function is as follows. Phosphatase that is active on 2-deoxy-D-glucose 6-phosphate (2-DOG-6P), but not very active on fructose-1-P. The sequence is that of 2-deoxyglucose-6-phosphate phosphatase 2 from Saccharomyces cerevisiae (strain ATCC 204508 / S288c) (Baker's yeast).